The primary structure comprises 166 residues: NAD(P)H-quinone oxidoreductase subunit I, chloroplastic (166 aa).

2 consecutive 4Fe-4S ferredoxin-type domains span residues 55 to 84 and 95 to 124; these read GRIH…VDWK and LNYS…MTEE. Cys-64, Cys-67, Cys-70, Cys-74, Cys-104, Cys-107, Cys-110, and Cys-114 together coordinate [4Fe-4S] cluster.

This sequence belongs to the complex I 23 kDa subunit family. In terms of assembly, NDH is composed of at least 16 different subunits, 5 of which are encoded in the nucleus. The cofactor is [4Fe-4S] cluster.

It localises to the plastid. The protein resides in the chloroplast thylakoid membrane. The enzyme catalyses a plastoquinone + NADH + (n+1) H(+)(in) = a plastoquinol + NAD(+) + n H(+)(out). It carries out the reaction a plastoquinone + NADPH + (n+1) H(+)(in) = a plastoquinol + NADP(+) + n H(+)(out). Its function is as follows. NDH shuttles electrons from NAD(P)H:plastoquinone, via FMN and iron-sulfur (Fe-S) centers, to quinones in the photosynthetic chain and possibly in a chloroplast respiratory chain. The immediate electron acceptor for the enzyme in this species is believed to be plastoquinone. Couples the redox reaction to proton translocation, and thus conserves the redox energy in a proton gradient. This Lactuca sativa (Garden lettuce) protein is NAD(P)H-quinone oxidoreductase subunit I, chloroplastic.